The primary structure comprises 27 residues: Morintide mO5 (27 aa).

One can recognise a Chitin-binding type-1 domain in the interval 1–27; sequence NGLCCSQYGFCGTTSQYCSRANGCQSN. Cys-4 and Cys-18 form a disulfide bridge.

In terms of tissue distribution, seeds (at protein level).

Functionally, chitin-binding protein which functions in defense against chitin-containing fungal pathogens. The chain is Morintide mO5 from Moringa oleifera (Horseradish tree).